The primary structure comprises 383 residues: S-adenosylmethionine synthase (383 aa).

ATP is bound at residue H15. Mg(2+) is bound at residue D17. E43 contributes to the K(+) binding site. The L-methionine site is built by E56 and Q99. The interval 99-109 (QSPDINQGVDK) is flexible loop. Residues 164-166 (DAK), 230-231 (RF), D239, 245-246 (RK), A262, and K266 contribute to the ATP site. D239 lines the L-methionine pocket. K270 is a binding site for L-methionine.

The protein belongs to the AdoMet synthase family. In terms of assembly, homotetramer; dimer of dimers. Mg(2+) serves as cofactor. Requires K(+) as cofactor.

The protein resides in the cytoplasm. It catalyses the reaction L-methionine + ATP + H2O = S-adenosyl-L-methionine + phosphate + diphosphate. Its pathway is amino-acid biosynthesis; S-adenosyl-L-methionine biosynthesis; S-adenosyl-L-methionine from L-methionine: step 1/1. Its function is as follows. Catalyzes the formation of S-adenosylmethionine (AdoMet) from methionine and ATP. The overall synthetic reaction is composed of two sequential steps, AdoMet formation and the subsequent tripolyphosphate hydrolysis which occurs prior to release of AdoMet from the enzyme. This Vibrio atlanticus (strain LGP32) (Vibrio splendidus (strain Mel32)) protein is S-adenosylmethionine synthase.